Reading from the N-terminus, the 341-residue chain is Glycerol-3-phosphate dehydrogenase [NAD(P)+] (341 aa).

NADPH-binding residues include Ser14, Phe15, Arg35, and Lys108. Lys108 and Gly136 together coordinate sn-glycerol 3-phosphate. Ala140 lines the NADPH pocket. The sn-glycerol 3-phosphate site is built by Lys191, Asp244, Ser254, Arg255, and Asn256. Residue Lys191 is the Proton acceptor of the active site. Arg255 contacts NADPH. Residues Val279 and Glu281 each contribute to the NADPH site.

It belongs to the NAD-dependent glycerol-3-phosphate dehydrogenase family.

It is found in the cytoplasm. The enzyme catalyses sn-glycerol 3-phosphate + NAD(+) = dihydroxyacetone phosphate + NADH + H(+). It catalyses the reaction sn-glycerol 3-phosphate + NADP(+) = dihydroxyacetone phosphate + NADPH + H(+). It participates in membrane lipid metabolism; glycerophospholipid metabolism. Functionally, catalyzes the reduction of the glycolytic intermediate dihydroxyacetone phosphate (DHAP) to sn-glycerol 3-phosphate (G3P), the key precursor for phospholipid synthesis. This is Glycerol-3-phosphate dehydrogenase [NAD(P)+] from Pseudomonas fluorescens (strain ATCC BAA-477 / NRRL B-23932 / Pf-5).